We begin with the raw amino-acid sequence, 241 residues long: DnaA regulatory inactivator Hda (241 aa).

The protein belongs to the DnaA family. HdA subfamily. As to quaternary structure, the active form seems to be an ADP-bound monomer. Forms the RIDA complex (regulatory inactivation of DnaA) of ATP-DnaA, ADP-Hda and the DNA-loaded beta sliding clamp (dnaN).

Mediates the interaction of DNA replication initiator protein DnaA with DNA polymerase subunit beta sliding clamp (dnaN). Stimulates hydrolysis of ATP-DnaA to ADP-DnaA, rendering DnaA inactive for reinitiation, a process called regulatory inhibition of DnaA or RIDA. This Salmonella arizonae (strain ATCC BAA-731 / CDC346-86 / RSK2980) protein is DnaA regulatory inactivator Hda.